Consider the following 338-residue polypeptide: tRNA (cytidine(56)-2'-O)-methyltransferase (338 aa).

Residues Leu79 and 105–109 contribute to the S-adenosyl-L-methionine site; that span reads GSEKV. Positions 188–295 constitute an HD domain; the sequence is LINHVKSVKE…VAHADNLFAG (108 aa).

The protein belongs to the aTrm56 family. Homodimer.

It is found in the cytoplasm. It carries out the reaction cytidine(56) in tRNA + S-adenosyl-L-methionine = 2'-O-methylcytidine(56) in tRNA + S-adenosyl-L-homocysteine + H(+). Functionally, specifically catalyzes the AdoMet-dependent 2'-O-ribose methylation of cytidine at position 56 in tRNAs. The sequence is that of tRNA (cytidine(56)-2'-O)-methyltransferase from Thermoplasma volcanium (strain ATCC 51530 / DSM 4299 / JCM 9571 / NBRC 15438 / GSS1).